The chain runs to 7260 residues: Nonribosomal peptide synthetase ecdA (7260 aa).

One can recognise a Carrier 1 domain in the interval 4-80; that stretch reads TNEMERKRVF…ELFETIQYLQ (77 aa). Ser-41 carries the O-(pantetheine 4'-phosphoryl)serine modification. The segment at 134–549 is condensation 1; it reads EDVYPSTPLQ…SINEILTLPA (416 aa). The tract at residues 575 to 965 is adenylation 1; that stretch reads QDQVRSQPAA…DGSLLYVGRC (391 aa). Positions 1090-1166 constitute a Carrier 2 domain; sequence APSTAIEHKL…DLARELEGRN (77 aa). O-(pantetheine 4'-phosphoryl)serine is present on Ser-1127. Residues 1208–1628 form a condensation 2 region; sequence EDIIPCTAMQ…LGDLSLLSAD (421 aa). The tract at residues 1653 to 2054 is adenylation 2; that stretch reads EEQITARPDS…GRRDTQIKIR (402 aa). Positions 2188–2264 constitute a Carrier 3 domain; sequence TPSTPTESQL…DLANLLSSRF (77 aa). Ser-2225 carries the post-translational modification O-(pantetheine 4'-phosphoryl)serine. The segment at 2314–2719 is condensation 3; the sequence is QDVYPCTPLQ…THVVQQLCDP (406 aa). The segment at 2763–3156 is adenylation 3; sequence KQALAQPNAP…GRRDTQVKIR (394 aa). One can recognise a Carrier 4 domain in the interval 3287-3365; the sequence is QPATEMEKML…ELAQVLEERV (79 aa). O-(pantetheine 4'-phosphoryl)serine is present on Ser-3324. A condensation 4 region spans residues 3417 to 3831; it reads VQDVYPCTPL…LLSPNDQQQI (415 aa). The segment at 3851–4248 is adenylation 4; that stretch reads EEQAMAHPTK…SFVYVARRNT (398 aa). The Carrier 5 domain occupies 4394–4471; the sequence is APATAMERTL…DLANLLADGA (78 aa). Position 4431 is an O-(pantetheine 4'-phosphoryl)serine (Ser-4431). The tract at residues 4510–4910 is condensation 5; the sequence is EDIYPATPLQ…HFVHVAEQLF (401 aa). Residues 4955 to 5357 form an adenylation 5 region; the sequence is ERAALQPNAP…GRRDLQVKIR (403 aa). The region spanning 5496–5573 is the Carrier 6 domain; that stretch reads APRTVMEQQV…DLALVLSERG (78 aa). An O-(pantetheine 4'-phosphoryl)serine modification is found at Ser-5533. The condensation 6 stretch occupies residues 5622–6043; the sequence is EDVYPCTPLQ…AVSEKDERQI (422 aa). Positions 6063–6460 are adenylation 6; the sequence is QEQVARTPGE…GRHDSQVKIR (398 aa). In terms of domain architecture, Carrier 7 spans 6592–6668; the sequence is APSTAMERQL…EVAQVVEDRV (77 aa). O-(pantetheine 4'-phosphoryl)serine is present on Ser-6629. The tract at residues 6718-7133 is condensation 7; sequence LPTTDFQALT…ILDSPGLLVS (416 aa). The tract at residues 7241–7260 is disordered; that stretch reads CEEAEKSASVTSSERRLATI.

Belongs to the NRP synthetase family.

The protein operates within antifungal biosynthesis. Its function is as follows. Nonribosomal peptide synthetase; part of the gene cluster that mediates the biosynthesis of echinocandin B, a fungal lipidated cyclic hexapeptide that acts as an antifungal agent. Linoleoyl-AMP, produced by the fatty-acyl-AMP ligase ecdI, is transferred to the initiation carrier domain (T0) of ecdA. The linoleoyl-S-phosphopantetheinyl-T0 is sequentially extended with L-ornithine, L-threonine, L-proline, L-homotyrosine, L-threonine, and 4R-methyl-L-proline to form the linear hexapeptide. Thereafter, the terminal condensation (C7) performs macrocyclization of the NRPS product and the cyclic scaffold is released from ecdA. All six of the amino acid residues are hydroxylated, including 4R,5R-dihydroxy-L-ornithine, 4R-hydroxyl-L-proline, 3S,4S-dihydroxy-L-homotyrosine, and 3S-hydroxyl-4S-methyl-L-prolin. In the pathway, all the hydroxylation reactions are proposed to occur following completion of the cyclic peptide, so the unhydroxylated precursor produced by ecdA will undergo six rounds of hydroxylation. Five hydroxylase genes (ecdG, ecdH, ecdK, htyE and htyF) are embedded within the echinocandin B (ecd) and L-homotyrosine (hty) clusters. The sequence is that of Nonribosomal peptide synthetase ecdA from Aspergillus rugulosus (Emericella rugulosa).